A 368-amino-acid chain; its full sequence is CST complex subunit STN1 (368 aa).

The interaction with CTC1 stretch occupies residues 1 to 185; the sequence is MQPGSSRCEE…KVYDQPFHSS (185 aa). Residues 57-155 constitute a DNA-binding region (OB); the sequence is VDVLGTVIGV…EIHATTYYKV (99 aa). Winged helix-turn-helix (wHTH) stretches follow at residues 191 to 295 and 296 to 368; these read EALS…YVTR and EDKD…YTAF.

The protein belongs to the STN1 family. As to quaternary structure, component of the CST complex, composed of TEN1/C17orf106, CTC1/C17orf68 and STN1; in the complex interacts directly with TEN1 and CTC1. Interacts with ACD/TPP1, POT1 and POLA1.

The protein localises to the nucleus. The protein resides in the chromosome. It localises to the telomere. Its function is as follows. Component of the CST complex proposed to act as a specialized replication factor promoting DNA replication under conditions of replication stress or natural replication barriers such as the telomere duplex. The CST complex binds single-stranded DNA with high affinity in a sequence-independent manner, while isolated subunits bind DNA with low affinity by themselves. Initially the CST complex has been proposed to protect telomeres from DNA degradation. However, the CST complex has been shown to be involved in several aspects of telomere replication. The CST complex inhibits telomerase and is involved in telomere length homeostasis; it is proposed to bind to newly telomerase-synthesized 3' overhangs and to terminate telomerase action implicating the association with the ACD:POT1 complex thus interfering with its telomerase stimulation activity. The CST complex is also proposed to be involved in fill-in synthesis of the telomeric C-strand probably implicating recruitment and activation of DNA polymerase alpha. The CST complex facilitates recovery from many forms of exogenous DNA damage; seems to be involved in the re-initiation of DNA replication at repaired forks and/or dormant origins. Required for efficicient replication of the duplex region of the telomere. Promotes efficient replication of lagging-strand telomeres. Promotes general replication start following replication-fork stalling implicating new origin firing. May be in involved in C-strand fill-in during late S/G2 phase independent of its role in telomere duplex replication. Functionally, component of the CST complex, a complex that binds to single-stranded DNA and is required to protect telomeres from DNA degradation. The CST complex binds single-stranded DNA with high affinity in a sequence-independent manner, while isolated subunits bind DNA with low affinity by themselves. In addition to telomere protection, the CST complex has probably a more general role in DNA metabolism at non-telomeric sites. This Homo sapiens (Human) protein is CST complex subunit STN1.